The chain runs to 74 residues: Translation initiation factor IF-1 (74 aa).

The region spanning Met-1 to Lys-73 is the S1-like domain.

Belongs to the IF-1 family. Component of the 30S ribosomal translation pre-initiation complex which assembles on the 30S ribosome in the order IF-2 and IF-3, IF-1 and N-formylmethionyl-tRNA(fMet); mRNA recruitment can occur at any time during PIC assembly.

It is found in the cytoplasm. Its function is as follows. One of the essential components for the initiation of protein synthesis. Stabilizes the binding of IF-2 and IF-3 on the 30S subunit to which N-formylmethionyl-tRNA(fMet) subsequently binds. Helps modulate mRNA selection, yielding the 30S pre-initiation complex (PIC). Upon addition of the 50S ribosomal subunit IF-1, IF-2 and IF-3 are released leaving the mature 70S translation initiation complex. This is Translation initiation factor IF-1 from Psychrobacter sp. (strain PRwf-1).